A 366-amino-acid polypeptide reads, in one-letter code: NADH-quinone oxidoreductase subunit D (366 aa).

The protein belongs to the complex I 49 kDa subunit family. In terms of assembly, NDH-1 is composed of 14 different subunits. Subunits NuoB, C, D, E, F, and G constitute the peripheral sector of the complex.

The protein localises to the cell membrane. The enzyme catalyses a quinone + NADH + 5 H(+)(in) = a quinol + NAD(+) + 4 H(+)(out). Its function is as follows. NDH-1 shuttles electrons from NADH, via FMN and iron-sulfur (Fe-S) centers, to quinones in the respiratory chain. The immediate electron acceptor for the enzyme in this species is believed to be a menaquinone. Couples the redox reaction to proton translocation (for every two electrons transferred, four hydrogen ions are translocated across the cytoplasmic membrane), and thus conserves the redox energy in a proton gradient. In Bacillus thuringiensis (strain Al Hakam), this protein is NADH-quinone oxidoreductase subunit D.